We begin with the raw amino-acid sequence, 125 residues long: Small ribosomal subunit protein uS11 (125 aa).

The disordered stretch occupies residues 101–125 (KDVKDVTPTPHNGTRPPKKILKREK). Positions 116–125 (PPKKILKREK) are enriched in basic residues.

This sequence belongs to the universal ribosomal protein uS11 family. As to quaternary structure, part of the 30S ribosomal subunit. Interacts with proteins S7 and S18. Binds to IF-3.

Its function is as follows. Located on the platform of the 30S subunit, it bridges several disparate RNA helices of the 16S rRNA. Forms part of the Shine-Dalgarno cleft in the 70S ribosome. The sequence is that of Small ribosomal subunit protein uS11 from Mycoplasma sp.